Consider the following 745-residue polypeptide: Exocyst complex component 3 (745 aa).

The residue at position 28 (Lys28) is an N6-acetyllysine.

This sequence belongs to the SEC6 family. In terms of assembly, the exocyst complex is composed of EXOC1, EXOC2, EXOC3, EXOC4, EXOC5, EXOC6, EXOC7 and EXOC8. Interacts with EXOC3L1. Interacts with BIRC6/bruce. Interacts with MYRIP. Interacts with SLC6A9. Expressed in epididymis (at protein level).

The protein localises to the cytoplasm. Its subcellular location is the perinuclear region. It localises to the cell projection. The protein resides in the growth cone. It is found in the midbody. The protein localises to the golgi apparatus. Its subcellular location is the neuron projection. Functionally, component of the exocyst complex involved in the docking of exocytic vesicles with fusion sites on the plasma membrane. The polypeptide is Exocyst complex component 3 (EXOC3) (Homo sapiens (Human)).